The following is a 1020-amino-acid chain: Protein translocase subunit SecA (1020 aa).

ATP contacts are provided by residues Q99, 117-121, and D633; that span reads GEGKT. The segment at 963 to 992 is disordered; it reads NEQPSQEMAADEETQEESKIEENKPEPIVV. A compositionally biased stretch (basic and acidic residues) spans 978–987; the sequence is EESKIEENKP. Zn(2+) contacts are provided by C1002, C1004, C1013, and C1014.

The protein belongs to the SecA family. In terms of assembly, monomer and homodimer. Part of the essential Sec protein translocation apparatus which comprises SecA, SecYEG and auxiliary proteins SecDF. Other proteins may also be involved. Requires Zn(2+) as cofactor.

Its subcellular location is the cell inner membrane. It is found in the cytoplasm. It carries out the reaction ATP + H2O + cellular proteinSide 1 = ADP + phosphate + cellular proteinSide 2.. In terms of biological role, part of the Sec protein translocase complex. Interacts with the SecYEG preprotein conducting channel. Has a central role in coupling the hydrolysis of ATP to the transfer of proteins into and across the cell membrane, serving as an ATP-driven molecular motor driving the stepwise translocation of polypeptide chains across the membrane. The sequence is that of Protein translocase subunit SecA from Protochlamydia amoebophila (strain UWE25).